A 414-amino-acid polypeptide reads, in one-letter code: Serine/threonine transporter SstT (414 aa).

Residues 2-15 (TTQRSPGLFRRLAH) lie on the Cytoplasmic side of the membrane. The helical transmembrane segment at 16–36 (GSLVKQILVGLVLGILLAWIS) threads the bilayer. Over 37–45 (KPAAEAVGL) the chain is Periplasmic. The chain crosses the membrane as a helical span at residues 46-66 (LGTLFVGALKAVAPILVLMLV). Residues 67-83 (MASIANHQHGQKTNIRP) lie on the Cytoplasmic side of the membrane. Residues 84–104 (ILFLYLLGTFSAALAAVVFSF) form a helical membrane-spanning segment. Topologically, residues 105 to 142 (AFPSTLHLSSSAGDISPPSGIVEVMRGLVMSMVSNPID) are periplasmic. The helical transmembrane segment at 143 to 163 (ALLKGNYIGILVWAIGLGFAL) threads the bilayer. Topologically, residues 164–179 (RHGNETTKNLVNDLSN) are cytoplasmic. A helical transmembrane segment spans residues 180-200 (AVTFMVKLVIRFAPIGIFGLV). Over 201-217 (SSTLATTGFSTLWGYAQ) the chain is Periplasmic. Residues 218–238 (LLVVLVGCMLLVALVVNPLLV) form a helical membrane-spanning segment. Topologically, residues 239–299 (WWKIRRNPFP…VSIPLGATIN (61 aa)) are cytoplasmic. The helical transmembrane segment at 300–320 (MAGAAITITVLTLAAVNTLGI) threads the bilayer. Residues 321-331 (PVDLPTALLLS) lie on the Periplasmic side of the membrane. The helical transmembrane segment at 332 to 352 (VVASLCACGASGVAGGSLLLI) threads the bilayer. Residues 353–414 (PLACNMFGIS…DRLANSALRN (62 aa)) lie on the Cytoplasmic side of the membrane.

The protein belongs to the dicarboxylate/amino acid:cation symporter (DAACS) (TC 2.A.23) family.

The protein localises to the cell inner membrane. It catalyses the reaction L-serine(in) + Na(+)(in) = L-serine(out) + Na(+)(out). The enzyme catalyses L-threonine(in) + Na(+)(in) = L-threonine(out) + Na(+)(out). Involved in the import of serine and threonine into the cell, with the concomitant import of sodium (symport system). The polypeptide is Serine/threonine transporter SstT (Shigella boydii serotype 4 (strain Sb227)).